A 401-amino-acid polypeptide reads, in one-letter code: Exodeoxyribonuclease 7 large subunit (401 aa).

Belongs to the XseA family. As to quaternary structure, heterooligomer composed of large and small subunits.

The protein resides in the cytoplasm. It carries out the reaction Exonucleolytic cleavage in either 5'- to 3'- or 3'- to 5'-direction to yield nucleoside 5'-phosphates.. Functionally, bidirectionally degrades single-stranded DNA into large acid-insoluble oligonucleotides, which are then degraded further into small acid-soluble oligonucleotides. The chain is Exodeoxyribonuclease 7 large subunit from Thermoanaerobacter pseudethanolicus (strain ATCC 33223 / 39E) (Clostridium thermohydrosulfuricum).